We begin with the raw amino-acid sequence, 63 residues long: Conotoxin Pu5.4 (63 aa).

Positions 1–22 are cleaved as a signal peptide; sequence MRCVPVFVILLLLIASTPSVDA. Positions 23-50 are excised as a propeptide; that stretch reads TQKTKDDMSLASFHDNAKRFLQTLRNTR. A Tryptophan amide modification is found at Trp-62.

The protein belongs to the conotoxin T superfamily. Contains 2 disulfide bonds that can be either 'C1-C3, C2-C4' or 'C1-C4, C2-C3', since these disulfide connectivities have been observed for conotoxins with cysteine framework V (for examples, see AC P0DQQ7 and AC P81755). In terms of tissue distribution, expressed by the venom duct.

Its subcellular location is the secreted. In Conus pulicarius (Flea-bitten cone), this protein is Conotoxin Pu5.4.